Here is a 700-residue protein sequence, read N- to C-terminus: Polyribonucleotide nucleotidyltransferase (700 aa).

Mg(2+) is bound by residues Asp-484 and Asp-490. In terms of domain architecture, KH spans Pro-551 to Ile-610. One can recognise an S1 motif domain in the interval Gly-620–Lys-688.

This sequence belongs to the polyribonucleotide nucleotidyltransferase family. Requires Mg(2+) as cofactor.

It localises to the cytoplasm. It carries out the reaction RNA(n+1) + phosphate = RNA(n) + a ribonucleoside 5'-diphosphate. Functionally, involved in mRNA degradation. Catalyzes the phosphorolysis of single-stranded polyribonucleotides processively in the 3'- to 5'-direction. The protein is Polyribonucleotide nucleotidyltransferase of Thermoanaerobacter pseudethanolicus (strain ATCC 33223 / 39E) (Clostridium thermohydrosulfuricum).